Here is a 1187-residue protein sequence, read N- to C-terminus: Nicotinate dehydrogenase subunit B (1187 aa).

The chain crosses the membrane as a helical span at residues 764 to 784 (WWFGSLAGVFGAALGMLATAL). 3 consecutive Cytochrome c domains span residues 804–907 (AMLE…MSQT), 949–1057 (AQWN…SSLE), and 1075–1163 (VSLS…RHRF). Heme c-binding residues include Cys818, Cys821, His822, Cys964, Cys967, His968, Cys1088, Cys1091, and His1092.

The cofactor is Mo-molybdopterin cytosine dinucleotide.

The protein resides in the membrane. The catalysed reaction is 2 Fe(III)-[cytochrome] + nicotinate + H2O = 2 Fe(II)-[cytochrome] + 6-hydroxynicotinate + 2 H(+). Its pathway is cofactor degradation; nicotinate degradation. In terms of biological role, subunit of the two-component enzyme NicAB that mediates nicotinate hydroxylation, the first step in the aerobic nicotinate degradation pathway. Mediates conversion of nicotinate into 6-hydroxynicotinate (6HNA). This is Nicotinate dehydrogenase subunit B (nicB) from Pseudomonas putida (strain ATCC 47054 / DSM 6125 / CFBP 8728 / NCIMB 11950 / KT2440).